A 314-amino-acid chain; its full sequence is Olfactory receptor 1468 (314 aa).

The Extracellular segment spans residues 1–25 (MTEENQTVISQFLLLGLPIPSEHQH). N-linked (GlcNAc...) asparagine glycosylation is present at Asn5. A helical transmembrane segment spans residues 26–49 (VFYALFLSMYLTTVLGNLIIIILI). Residues 50 to 57 (HLDSHLHT) lie on the Cytoplasmic side of the membrane. A helical transmembrane segment spans residues 58–79 (PMYLFLSNLSFSDLCFSSVTMP). The Extracellular segment spans residues 80 to 100 (KLLQNMQSQVPSIPFAGCLTQ). Cys97 and Cys189 are joined by a disulfide. A helical transmembrane segment spans residues 101–120 (LYFYLYFADLESFLLVAMAY). The Cytoplasmic portion of the chain corresponds to 121 to 139 (DRYVAICFPLHYMSIMSPK). Residues 140 to 158 (LCVSLVVLSWVLTTFHAML) traverse the membrane as a helical segment. Residues 159–196 (HTLLMARLSFCADNMIPHFFCDISPLLKLSCSDTHVNE) lie on the Extracellular side of the membrane. A helical transmembrane segment spans residues 197–219 (LVIFVMGGLVIVIPFVLIIVSYA). Residues 220 to 236 (RVVASILKVPSVRGIHK) lie on the Cytoplasmic side of the membrane. A helical transmembrane segment spans residues 237-260 (IFSTCGSHLSVVSLFYGTIIGLYL). The Extracellular segment spans residues 261–272 (CPSANNSTVKET). A helical transmembrane segment spans residues 273 to 292 (VMAMMYTVVTPMLNPFIYSL). At 293–314 (RNRDMKEALIRVLCKKKITFCL) the chain is on the cytoplasmic side.

Belongs to the G-protein coupled receptor 1 family. As to expression, olfactory epithelium.

It is found in the cell membrane. Odorant receptor. The polypeptide is Olfactory receptor 1468 (Olr1468) (Rattus norvegicus (Rat)).